Consider the following 333-residue polypeptide: Fibronectin type III domain-containing protein 11 (333 aa).

Positions 212 to 310 constitute a Fibronectin type-III domain; sequence PVMFDRKESV…DSLTLHTRPG (99 aa). The segment at 307 to 333 is disordered; that stretch reads TRPGPPEGLAPSRLGKLGLSLTTPSER.

This chain is Fibronectin type III domain-containing protein 11, found in Bos taurus (Bovine).